The chain runs to 270 residues: Acyl-[acyl-carrier-protein]--UDP-N-acetylglucosamine O-acyltransferase (270 aa).

This sequence belongs to the transferase hexapeptide repeat family. LpxA subfamily. As to quaternary structure, homotrimer.

The protein resides in the cytoplasm. The enzyme catalyses a (3R)-hydroxyacyl-[ACP] + UDP-N-acetyl-alpha-D-glucosamine = a UDP-3-O-[(3R)-3-hydroxyacyl]-N-acetyl-alpha-D-glucosamine + holo-[ACP]. It participates in glycolipid biosynthesis; lipid IV(A) biosynthesis; lipid IV(A) from (3R)-3-hydroxytetradecanoyl-[acyl-carrier-protein] and UDP-N-acetyl-alpha-D-glucosamine: step 1/6. In terms of biological role, involved in the biosynthesis of lipid A, a phosphorylated glycolipid that anchors the lipopolysaccharide to the outer membrane of the cell. The chain is Acyl-[acyl-carrier-protein]--UDP-N-acetylglucosamine O-acyltransferase from Bartonella tribocorum (strain CIP 105476 / IBS 506).